The sequence spans 549 residues: MKNINPTQTAAWQALQKHFDEMKDVTIADLFAKDGDRFSKFSATFDDQMLVDYSKNRITEETLAKLQDLAKECDLAGAIKSMFSGEKINRTENRAVLHVALRNRSNTPILVDGKDVMPEVNAVLEKMKTFSEAIISGEWKGYTGKAITDVVNIGIGGSDLGPYMVTEALRPYKNHLNMHFVSNVDGTHIAEVLKKVNSETTLFLVASKTFTTQETMTNAHSARDWFLKAAGDEKHVAKHFAALSTNAKAVGEFGIDTANMFEFWDWVGGRYSLWSAIGLSIVLSIGFDNFVELLSGAHAMDKHFSTTPAEKNLPVLLALIGIWYNNFFGAETEAILPYDQYMHRFAAYFQQGNMESNGKYVDRNGNVVDYQTGPIIWGEPGTNGQHAFYQLIHQGTKIVPCDFIAPAITHNPLSDHHQKLLSNFFAQTEALAFGKSREVVEQEYRDQGKDPATLDYVVPFKVFEGNRPTNSILLREITPFSLGALIALYEHKIFTQGVILNIFTFDQWGVELGKQLANRILPELKDDKEISSHDSSTNGLINRYKAWRG.

N6-acetyllysine occurs at positions 80, 228, and 234. The Proton donor role is filled by Glu355. Active-site residues include His386 and Lys514.

Belongs to the GPI family.

Its subcellular location is the cytoplasm. It carries out the reaction alpha-D-glucose 6-phosphate = beta-D-fructose 6-phosphate. It participates in carbohydrate biosynthesis; gluconeogenesis. Its pathway is carbohydrate degradation; glycolysis; D-glyceraldehyde 3-phosphate and glycerone phosphate from D-glucose: step 2/4. Its function is as follows. Catalyzes the reversible isomerization of glucose-6-phosphate to fructose-6-phosphate. The protein is Glucose-6-phosphate isomerase of Escherichia coli O17:K52:H18 (strain UMN026 / ExPEC).